The sequence spans 303 residues: uncharacterized protein (303 aa).

Disordered stretches follow at residues 1 to 89 and 132 to 159; these read MTSP…NVRS and SELP…STPR. Residues 61-89 are compositionally biased toward polar residues; the sequence is RASQSGYRPSDPLTTTRQSNPAPGANVRS. 2 helical membrane passes run 205–225 and 264–284; these read LLLS…LYLL and VLVG…AAFV.

This sequence to M.tuberculosis Rv0007.

Its subcellular location is the cell membrane. This is an uncharacterized protein from Mycobacterium leprae (strain TN).